The following is a 603-amino-acid chain: Probable methyltransferase PMT4 (603 aa).

At 1 to 12 (MKVASVIGLRPR) the chain is on the cytoplasmic side. Residues 13-33 (ISGLLFLTLGVIALITILVPN) traverse the membrane as a helical; Signal-anchor for type II membrane protein segment. The Lumenal segment spans residues 34 to 603 (SDSSSTTSTT…LVCQKPLLKK (570 aa)). N-linked (GlcNAc...) asparagine glycosylation is found at asparagine 96 and asparagine 393.

This sequence belongs to the methyltransferase superfamily.

Its subcellular location is the endoplasmic reticulum membrane. This chain is Probable methyltransferase PMT4, found in Arabidopsis thaliana (Mouse-ear cress).